We begin with the raw amino-acid sequence, 681 residues long: MSSPKNEMYYSLLEWFKTLNLNAPHSDAESLADGVALAQALNQFAPESFTDGWLSKIKPGAVGSNWRLRMSNLKKVAQSVYDYYSEVLNYSLGDFAKPDVQRIAEKCDLGELERLLQLVLGCAVNCTNKQSYITEIMSLEEELQANIMRALQELESTRNASSSPEAGGVVSSLSRSSLSGILDGKALQEERDAMAQKCFETEKKMLLLIDEKTNLQQELQKLQQEVSRMEHSSTAIGDDGVSLGPVQTGSVRYNDLRRQLDLLKEELLQSEGAREDLKLKAHQQETDLLHMQIRIDELMKSSAEVTTLKDEVDVLRESNDKLKICEAQLDTYKKKLEDYNDLKKQVRILEERSADYVQQNAQFEEDAKRYANTKGQVELFKKEIQDLHAKLDNESSKNVKLEFDNKNLESKNLALQRAKDSLLKERDNLREVVDELKCGQLSSSSALAGNTVSTELQPLATVDKLQRLEAENKALREGQGGQTALAQLLDEANKRNEHLREQLKTANERILSLSHATQSDDPIFKENEFGKQIKQLMELNEQKTLQLEEAVTQSSTMQCKVTQLETNLAAREQEILAYDAKYRKCVEKAKEVIKSIDPRIASALDASVLEKNAEVVEEEPKPKMTVMEEQLMTSAFYRLGVNAQRDAIDSKLAILMGSGQTFLARQRQSAPRKSLSAMKSK.

One can recognise a Calponin-homology (CH) domain in the interval 6–123; that stretch reads NEMYYSLLEW…RLLQLVLGCA (118 aa). Coiled coils occupy residues 135–439 and 482–584; these read EIMS…LKCG and QTAL…KYRK.

This sequence belongs to the hook family. Homodimer. Interacts with microtubules via its N-terminus.

The protein resides in the cytoplasm. Its subcellular location is the cytoskeleton. It localises to the endosome. It is found in the synapse. In terms of biological role, involved in endocytic trafficking by stabilizing organelles of the endocytic pathway. Probably acts as a cytoskeletal linker protein required to tether endosome vesicles to the cytoskeleton. Involved in modulation of endocytosis at stages required for down-regulation of membrane proteins that control synapse size. Not involved in synaptic vesicle recycling. Required in R7 cells for boss endocytosis into multivesicular bodies (MVBs). Has a role in regulating adult longevity. The protein is Protein hook of Drosophila ananassae (Fruit fly).